We begin with the raw amino-acid sequence, 259 residues long: Thiazole synthase (259 aa).

Lys98 acts as the Schiff-base intermediate with DXP in catalysis. 1-deoxy-D-xylulose 5-phosphate-binding positions include Gly159, 185–186, and 207–208; these read AG and NS.

It belongs to the ThiG family. In terms of assembly, homotetramer. Forms heterodimers with either ThiH or ThiS.

The protein resides in the cytoplasm. It catalyses the reaction [ThiS sulfur-carrier protein]-C-terminal-Gly-aminoethanethioate + 2-iminoacetate + 1-deoxy-D-xylulose 5-phosphate = [ThiS sulfur-carrier protein]-C-terminal Gly-Gly + 2-[(2R,5Z)-2-carboxy-4-methylthiazol-5(2H)-ylidene]ethyl phosphate + 2 H2O + H(+). The protein operates within cofactor biosynthesis; thiamine diphosphate biosynthesis. Functionally, catalyzes the rearrangement of 1-deoxy-D-xylulose 5-phosphate (DXP) to produce the thiazole phosphate moiety of thiamine. Sulfur is provided by the thiocarboxylate moiety of the carrier protein ThiS. In vitro, sulfur can be provided by H(2)S. This Chlorobium phaeovibrioides (strain DSM 265 / 1930) (Prosthecochloris vibrioformis (strain DSM 265)) protein is Thiazole synthase.